The sequence spans 368 residues: MDFDSYQHYFYDYDCGEDFYRSTAPSEDIWKKFELVPSPPTSPPWGSGPGAVDPASGINPGEPWPGGGAGDEAESRGHSKAWGRNYASIIRRDCMWSGFSARERLERVVSDRLAPGAPRGNPPKAPATPDGTPSLEASNPAPATQCQLGEPKTQACSGSESPSDSEGEEIDVVTVEKRRSLDIRKPVTITVRADPLDPCMKHFHISIHQQQHNYAARFPPESCSQEGDPEPGPQEEAPEIEAPKEKEEEEEEEEEEEIVSPPPVGSEAPQSCHPKPVSSDTEDVTKRKNHNFLERKRRNDLRSRFLALRDQVPTLASCSKAPKVVILSKALEYLQALVGAEKKMATEKRQLRCRQQQLQKRIAYLSGY.

Disordered stretches follow at residues 39–79 (PPTS…RGHS), 112–179 (RLAP…EKRR), and 218–295 (FPPE…FLER). Residues 135-147 (LEASNPAPATQCQ) are compositionally biased toward polar residues. The segment covering 247–258 (EEEEEEEEEEEI) has biased composition (acidic residues). A compositionally biased stretch (basic and acidic residues) spans 283–294 (DVTKRKNHNFLE). The 53-residue stretch at 285-337 (TKRKNHNFLERKRRNDLRSRFLALRDQVPTLASCSKAPKVVILSKALEYLQAL) folds into the bHLH domain. The segment at 337–365 (LVGAEKKMATEKRQLRCRQQQLQKRIAYL) is leucine-zipper.

As to quaternary structure, efficient DNA binding requires dimerization with another bHLH protein. Binds DNA as a heterodimer with MAX.

The protein localises to the nucleus. In Mus musculus (Mouse), this protein is Protein L-Myc (Mycl).